The following is a 508-amino-acid chain: 2,3-bisphosphoglycerate-independent phosphoglycerate mutase (508 aa).

Positions 9 and 59 each coordinate Mn(2+). Ser-59 functions as the Phosphoserine intermediate in the catalytic mechanism. Residues His-120, 149-150 (RD), Arg-181, Arg-187, 254-257 (RADR), and Lys-331 each bind substrate. Residues Asp-398, His-402, Asp-439, His-440, and His-456 each contribute to the Mn(2+) site.

This sequence belongs to the BPG-independent phosphoglycerate mutase family. The cofactor is Mn(2+).

It carries out the reaction (2R)-2-phosphoglycerate = (2R)-3-phosphoglycerate. Its pathway is carbohydrate degradation; glycolysis; pyruvate from D-glyceraldehyde 3-phosphate: step 3/5. Catalyzes the interconversion of 2-phosphoglycerate and 3-phosphoglycerate. This is 2,3-bisphosphoglycerate-independent phosphoglycerate mutase from Halobacterium salinarum (strain ATCC 700922 / JCM 11081 / NRC-1) (Halobacterium halobium).